The primary structure comprises 171 residues: Inosine/xanthosine triphosphatase (171 aa).

Residue 8 to 13 participates in substrate binding; the sequence is TTNPAK. 2 residues coordinate Mg(2+): Glu38 and Glu68. 68 to 69 provides a ligand contact to substrate; the sequence is EA.

It belongs to the YjjX NTPase family. In terms of assembly, homodimer. Mg(2+) serves as cofactor. Mn(2+) is required as a cofactor.

It carries out the reaction XTP + H2O = XDP + phosphate + H(+). It catalyses the reaction ITP + H2O = IDP + phosphate + H(+). In terms of biological role, phosphatase that hydrolyzes non-canonical purine nucleotides such as XTP and ITP to their respective diphosphate derivatives. Probably excludes non-canonical purines from DNA/RNA precursor pool, thus preventing their incorporation into DNA/RNA and avoiding chromosomal lesions. The sequence is that of Inosine/xanthosine triphosphatase (yjjX) from Salmonella arizonae (strain ATCC BAA-731 / CDC346-86 / RSK2980).